The primary structure comprises 652 residues: NADH-ubiquinone oxidoreductase chain 5 (652 aa).

Transmembrane regions (helical) follow at residues 1-21 (MYLSIIILPLLGCIVSGFLGR), 30-50 (LITCSNVVITTILSILAFIEV), 72-92 (IIWGFQFDSLTVSMLIPVLII), 119-139 (LFTFMMIILVTANNYLLMFVG), 140-160 (WEGVGVCSYLLVSFWFTRIAA), 177-197 (FLTIGMFAILWSLGNLDYSTV), 200-220 (LAPYINSKVVLIIGICLLIGA), 241-261 (TPVSALIHAATMVTAGVYLLM), 274-294 (LLLCLWLGAITTVFSSLIGLF), 301-319 (VIAYSTMSQLGMMVIAIGL), 331-351 (NHAFYKALLFLGAGSVIHAVA), 365-385 (FLPLTYSVMLIASLSLVAFPF), 403-423 (FSFSGVAVYIIATIGAIFTTL), 454-474 (LFLTLPLIILAIFSIFFGFIT), 505-525 (FAVPVLFKLLPFIFTISFSII), and 619-639 (LYILVAFILYLLYNYLSFNFL).

Belongs to the complex I subunit 5 family.

It is found in the mitochondrion inner membrane. It carries out the reaction a ubiquinone + NADH + 5 H(+)(in) = a ubiquinol + NAD(+) + 4 H(+)(out). Core subunit of the mitochondrial membrane respiratory chain NADH dehydrogenase (Complex I) that is believed to belong to the minimal assembly required for catalysis. Complex I functions in the transfer of electrons from NADH to the respiratory chain. The immediate electron acceptor for the enzyme is believed to be ubiquinone. The sequence is that of NADH-ubiquinone oxidoreductase chain 5 (ND5) from Podospora anserina (strain S / ATCC MYA-4624 / DSM 980 / FGSC 10383) (Pleurage anserina).